We begin with the raw amino-acid sequence, 248 residues long: UDP-2,3-diacylglucosamine hydrolase (248 aa).

Mn(2+) is bound by residues Asp-7, His-9, Asp-40, Asn-78, and His-113. 78-79 (NR) contributes to the substrate binding site. Positions 121, 159, 163, 166, and 194 each coordinate substrate. Mn(2+) is bound by residues His-194 and His-196.

The protein belongs to the LpxH family. Mn(2+) is required as a cofactor.

It is found in the cell inner membrane. The catalysed reaction is UDP-2-N,3-O-bis[(3R)-3-hydroxytetradecanoyl]-alpha-D-glucosamine + H2O = 2-N,3-O-bis[(3R)-3-hydroxytetradecanoyl]-alpha-D-glucosaminyl 1-phosphate + UMP + 2 H(+). It participates in glycolipid biosynthesis; lipid IV(A) biosynthesis; lipid IV(A) from (3R)-3-hydroxytetradecanoyl-[acyl-carrier-protein] and UDP-N-acetyl-alpha-D-glucosamine: step 4/6. Hydrolyzes the pyrophosphate bond of UDP-2,3-diacylglucosamine to yield 2,3-diacylglucosamine 1-phosphate (lipid X) and UMP by catalyzing the attack of water at the alpha-P atom. Involved in the biosynthesis of lipid A, a phosphorylated glycolipid that anchors the lipopolysaccharide to the outer membrane of the cell. This Pseudomonas fluorescens (strain Pf0-1) protein is UDP-2,3-diacylglucosamine hydrolase.